Here is a 201-residue protein sequence, read N- to C-terminus: Chromophore lyase CpcT/CpeT (201 aa).

Belongs to the CpcT/CpeT biliprotein lyase family.

The protein localises to the plastid. It localises to the organellar chromatophore. Its function is as follows. Covalently attaches a chromophore to Cys residue(s) of phycobiliproteins. This is Chromophore lyase CpcT/CpeT from Paulinella chromatophora.